Consider the following 93-residue polypeptide: MSFLNFAFSPVFFSIMACYFIVWRNKRNEFVCNRLLSIIIISFLICFIYPWLNYKIEVKYYIFEQFYLFCFLSSLVAVVINLIVYFILYRRCI.

Helical transmembrane passes span phenylalanine 3 to tryptophan 23, leucine 36 to isoleucine 56, and leucine 68 to leucine 88.

This sequence belongs to the MceB microcin immunity protein family.

It localises to the cell inner membrane. Functionally, probably able to protect the producing cell against microcin N (microcin 24). This chain is Microcin N immunity protein, found in Escherichia coli.